Here is a 413-residue protein sequence, read N- to C-terminus: MAP kinase-interacting serine/threonine-protein kinase 1 (413 aa).

Residues 1-26 are disordered; the sequence is MGSSEPLPIVDSDKRRKKKRKTRATD. T22 is subject to Phosphothreonine; by PAK2. Position 27 is a phosphoserine; by PAK2 (S27). The Protein kinase domain occupies 37-321; sequence QLTSELLGEG…AAQVLQHPWV (285 aa). ATP contacts are provided by residues 43-51 and K66; that span reads LGEGAYAKV. D158 (proton acceptor) is an active-site residue. Phosphoserine occurs at positions 168 and 173. 3 positions are modified to phosphothreonine: T197, T202, and T332.

The protein belongs to the protein kinase superfamily. CAMK Ser/Thr protein kinase family. As to quaternary structure, interacts with the C-terminal regions of EIF4G1 and EIF4G2. Also binds to dephosphorylated ERK1 and ERK2, and to the p38 kinases. Mg(2+) serves as cofactor. Post-translationally, dual phosphorylation of Thr-197 and Thr-202 activates the kinase. Phosphorylation of Thr-332 activates the kinase. MAPK3/ERK1 is one of the kinases which activate MKNK1/MNK1. Phosphorylation by PAK2 leads to a reduced phosphorylation of EIF4G1.

It catalyses the reaction L-seryl-[protein] + ATP = O-phospho-L-seryl-[protein] + ADP + H(+). It carries out the reaction L-threonyl-[protein] + ATP = O-phospho-L-threonyl-[protein] + ADP + H(+). Phosphorylated and activated by the p38 kinases and kinases in the Erk pathway. In terms of biological role, may play a role in the response to environmental stress and cytokines. Appears to regulate translation by phosphorylating EIF4E, thus increasing the affinity of this protein for the 7-methylguanosine-containing mRNA cap. The protein is MAP kinase-interacting serine/threonine-protein kinase 1 (Mknk1) of Rattus norvegicus (Rat).